The sequence spans 1629 residues: Ferredoxin-dependent glutamate synthase 2, chloroplastic (1629 aa).

Residues 1-107 (MALQSPGATG…LEDIISERGA (107 aa)) constitute a chloroplast transit peptide. Cys-108 functions as the For GATase activity in the catalytic mechanism. One can recognise a Glutamine amidotransferase type-2 domain in the interval 108–507 (CGVGFIANLE…PGMMISVDLE (400 aa)). 1186-1243 (LAETQKTLIGNGLRERVIIRVDGGFKSGVDVLIAAAMGADEYGFGTLAMIATGCIMAR) is a binding site for FMN. [3Fe-4S] cluster is bound by residues Cys-1239, Cys-1245, and Cys-1250. Positions 1599 to 1629 (SEEDTPEANSDHILKTTTGDEEQVSSTLAEK) are disordered.

This sequence belongs to the glutamate synthase family. [3Fe-4S] cluster is required as a cofactor. Requires FAD as cofactor. The cofactor is FMN. As to expression, expressed predominantly in roots and slightly in leaves. Low expression in the leaf mesophyll and phloem companion cell-sieve element complex.

The protein resides in the plastid. It is found in the chloroplast stroma. It carries out the reaction 2 oxidized [2Fe-2S]-[ferredoxin] + 2 L-glutamate = L-glutamine + 2 reduced [2Fe-2S]-[ferredoxin] + 2-oxoglutarate + 2 H(+). The protein operates within amino-acid biosynthesis; L-glutamate biosynthesis via GLT pathway; L-glutamate from 2-oxoglutarate and L-glutamine (ferredoxin route): step 1/1. Its pathway is energy metabolism; nitrogen metabolism. In terms of biological role, may play a role in primary nitrogen assimilation in roots. Could supply a constitutive level of glutamate to maintain a basal level of protein synthesis. The polypeptide is Ferredoxin-dependent glutamate synthase 2, chloroplastic (GLU2) (Arabidopsis thaliana (Mouse-ear cress)).